A 180-amino-acid polypeptide reads, in one-letter code: 3-hydroxyanthranilate 3,4-dioxygenase (180 aa).

Arg44 contacts O2. Fe cation-binding residues include His48, Glu54, and His92. Glu54 is a binding site for substrate. Residues Arg96 and Glu106 each contribute to the substrate site. Cys121, Cys124, Cys158, and Cys161 together coordinate a divalent metal cation.

Belongs to the 3-HAO family. It depends on Fe(2+) as a cofactor.

The protein resides in the cytoplasm. The enzyme catalyses 3-hydroxyanthranilate + O2 = (2Z,4Z)-2-amino-3-carboxymuconate 6-semialdehyde. It functions in the pathway cofactor biosynthesis; NAD(+) biosynthesis; quinolinate from L-kynurenine: step 3/3. Its function is as follows. Catalyzes the oxidative ring opening of 3-hydroxyanthranilate to 2-amino-3-carboxymuconate semialdehyde, which spontaneously cyclizes to quinolinate. This chain is 3-hydroxyanthranilate 3,4-dioxygenase (bna1), found in Neurospora crassa (strain ATCC 24698 / 74-OR23-1A / CBS 708.71 / DSM 1257 / FGSC 987).